Consider the following 225-residue polypeptide: Ribosomal RNA small subunit methyltransferase G (225 aa).

Residues G69, 119–120 (AE), and R136 each bind S-adenosyl-L-methionine.

It belongs to the methyltransferase superfamily. RNA methyltransferase RsmG family.

The protein resides in the cytoplasm. Its function is as follows. Specifically methylates the N7 position of a guanine in 16S rRNA. This chain is Ribosomal RNA small subunit methyltransferase G, found in Pseudothermotoga lettingae (strain ATCC BAA-301 / DSM 14385 / NBRC 107922 / TMO) (Thermotoga lettingae).